The sequence spans 79 residues: uncharacterized protein (79 aa).

The chain crosses the membrane as a helical span at residues 15-37 (KSIVSVLALTSLGCGVFVISATA).

The protein localises to the membrane. This is an uncharacterized protein from Dictyostelium discoideum (Social amoeba).